The sequence spans 419 residues: Putative zinc metalloprotease SPy_1963/M5005_Spy1674 (419 aa).

Residue His18 participates in Zn(2+) binding. Glu19 is an active-site residue. His22 is a binding site for Zn(2+). Helical transmembrane passes span 169–191, 301–323, 343–365, and 392–411; these read LITNFAGPMNNFILGIVVFILLV, LAWSRAFTILNALKGLITGFSLN, LESVLSLMAMLSINLGIFNLIPI, and AYITLAGVAIMVVLMIAVTW. A PDZ domain is found at 175–274; it reads GPMNNFILGI…LKTVAVKPQK (100 aa).

Belongs to the peptidase M50B family. It depends on Zn(2+) as a cofactor.

The protein resides in the cell membrane. In Streptococcus pyogenes serotype M1, this protein is Putative zinc metalloprotease SPy_1963/M5005_Spy1674.